The chain runs to 274 residues: Undecaprenyl-diphosphatase (274 aa).

8 helical membrane passes run 4-24 (LLVIKAIIMGIVEGITELLPI), 46-66 (VVFEIFIQMGAMLAIVWEYRV), 86-106 (INVAIAFFPAALVGFLFSDFI), 109-129 (VLFSPYVVAGGFIVGGVIIMW), 145-165 (ISYADAFNVGLCQCLALIPGT), 188-208 (FSFFLAIPMIGAASLYALWEA), 214-234 (IEDMGILAIGFITSFFVTFAV), and 250-270 (FAWYRIAFGLLVLATAYTGVI).

It belongs to the UppP family.

The protein localises to the cell inner membrane. The catalysed reaction is di-trans,octa-cis-undecaprenyl diphosphate + H2O = di-trans,octa-cis-undecaprenyl phosphate + phosphate + H(+). Its function is as follows. Catalyzes the dephosphorylation of undecaprenyl diphosphate (UPP). Confers resistance to bacitracin. This is Undecaprenyl-diphosphatase from Cellvibrio japonicus (strain Ueda107) (Pseudomonas fluorescens subsp. cellulosa).